Here is a 563-residue protein sequence, read N- to C-terminus: Arginine--tRNA ligase (563 aa).

The 'HIGH' region motif lies at 122–132; that stretch reads PNIAKPMSMGH.

The protein belongs to the class-I aminoacyl-tRNA synthetase family. Monomer.

It localises to the cytoplasm. The enzyme catalyses tRNA(Arg) + L-arginine + ATP = L-arginyl-tRNA(Arg) + AMP + diphosphate. The polypeptide is Arginine--tRNA ligase (Levilactobacillus brevis (strain ATCC 367 / BCRC 12310 / CIP 105137 / JCM 1170 / LMG 11437 / NCIMB 947 / NCTC 947) (Lactobacillus brevis)).